The chain runs to 319 residues: Probable ABC transporter permease protein MG189 homolog (319 aa).

A run of 6 helical transmembrane segments spans residues 41 to 61 (VVLC…LVVA), 98 to 118 (AIWI…FFTV), 134 to 154 (LFWF…LIGQ), 169 to 189 (PAII…GFMF), 229 to 249 (TVSI…LLLL), and 282 to 302 (NLKM…YFLF). One can recognise an ABC transmembrane type-1 domain in the interval 99 to 302 (IWINSLVTIL…LPMFIVYFLF (204 aa)).

The protein belongs to the binding-protein-dependent transport system permease family. MalFG subfamily.

Its subcellular location is the cell membrane. Functionally, probably part of a binding-protein-dependent transport system. Probably responsible for the translocation of the substrate across the membrane. The polypeptide is Probable ABC transporter permease protein MG189 homolog (Mycoplasma pneumoniae (strain ATCC 29342 / M129 / Subtype 1) (Mycoplasmoides pneumoniae)).